An 867-amino-acid chain; its full sequence is Probable alpha,alpha-trehalose-phosphate synthase [UDP-forming] 9 (867 aa).

Position 5 is a phosphoserine (Ser-5). Position 32 is a phosphothreonine (Thr-32). The glycosyltransferase stretch occupies residues 59–546 (ERKIIVANML…AKSFMQDLER (488 aa)).

It in the N-terminal section; belongs to the glycosyltransferase 20 family. This sequence in the C-terminal section; belongs to the trehalose phosphatase family.

It catalyses the reaction D-glucose 6-phosphate + UDP-alpha-D-glucose = alpha,alpha-trehalose 6-phosphate + UDP + H(+). The chain is Probable alpha,alpha-trehalose-phosphate synthase [UDP-forming] 9 (TPS9) from Arabidopsis thaliana (Mouse-ear cress).